Reading from the N-terminus, the 505-residue chain is MPLILSITSSGTVLVLLTLLSLAAVVILSTYRLIKYRHIPGPLLCRVSHHYVTLFDLLRQRPQTVAKWHRQYGPFVQIAPGQVSISDVTAMRELYSSSARNPKSGYFDNFLYHNARAIFAEKEYLGHREKRGLVSSFFQATSVYKPDIQQPLRDRVLAAMMRIEENIITSGQGVVDVMPIINHYAWDNTTSLVFGPCHSSQALQGDENDRNLLARLKNSEMWGAVKNNLPIVFSGIKLAVAVYTRSTKYFSAEDDLDKWAMQRLYKTTSDPKSSQDERSIVQLIQHLRQNGRPLSDSYLESEIIDNLYAGQATVTVALTYAVYHLSRNPYWQSMVQRELDGLPRDADGLPNWTLLNKAPILEACIRESYRLNPVASGRAERVLARDSRYGDIFIPQNTIVSASTIALHLDPQVWLNPREFNPRRWLDATPDEILRLERSFIPFGYGARLCLGKAFANLQIKMFVAAIYSKDNTGLEIPGQTMEQWGTQDALPKGLKCRLRFEERK.

The N-terminal stretch at 1–23 (MPLILSITSSGTVLVLLTLLSLA) is a signal peptide. 2 N-linked (GlcNAc...) asparagine glycosylation sites follow: asparagine 188 and asparagine 351. Cysteine 450 is a heme binding site.

It belongs to the cytochrome P450 family. It depends on heme as a cofactor.

It participates in secondary metabolite biosynthesis. Cytochrome P450 monooxygenase; part of the Fg3_54/C64 gene cluster that mediates the biosynthesis of the octapeptide fusaoctaxin A, a virulence factor that is required for cell-to-cell invasiveness of plant host. The 2 nonribosomal peptide synthetases NRPS9 and NRPS5 form an assembly line which likely utilizes GABA as a starter unit (loaded on the unique module M1 of NRPS9) and sequentially incorporates seven extender units composed of the residues L-Ala, L-allo-Ile, L-Ser, L-Val, L-Ser, L-Leu and L-Leu, respectively. During the process, each of the residues that are tethered on modules M3-M7 of NRPS5 containing an E domain can undergo an epimerization reaction to produce a D-configuration before the transpeptidation reaction occurs. The elongation of the peptidyl chain might be terminated by module M8-mediated L-Leu incorporation, followed by R domain-catalyzed 4 electron reduction to release the resulting octapeptide from the assembly line as an alcohol. Fusaoctaxin A is cleaved by the cluster specific ABC transporter FGM5 to the pentapeptide fusapentaxin A and the tripeptide fusatrixin A. The other enzymes from the cluster, FGM1, FGM2, FGM3 and FGM9 seem not to be involved in the biosynthesis of fusaoctaxin A and their functions have still to be determined. The sequence is that of Cytochrome P450 monooxygenase FGM1 from Gibberella zeae (strain ATCC MYA-4620 / CBS 123657 / FGSC 9075 / NRRL 31084 / PH-1) (Wheat head blight fungus).